Reading from the N-terminus, the 492-residue chain is MKKTRDNPCDKIDCGKPKNTKGVSLVKKHIFEDIILQNALNFTEEVVEIFGDLLNKGMNITELVARIKELTDKLGRGAIEAIIEELDRIIKEDKRRKEKWVVERKDKKRLTTVLGDIEYERTYYKSKEDGRYTYLVDDALEIGRHDRIEKGVKIKLVENAIEESYERSSKKACPEELSKQTVLNAIREIGEVEVKREIKEKKEVRGLYIEADEDHVPLQDGRDETPRLVYIHEGREEKNGRNVLKNVYYKAYVGEKPEDIWIDVANYIEDNYKEEKIEKIYIAGDGAPWIKEGLKWILKSRFVLDRYHLNKYVLKATSKEPKYRDKIWRAINEGDKEGVKKVFDELIKAAEEEREKEKIKEAKKYILNNWEGIKIYSEDEDVIGCSAEGHISHVFSARLSRNPLGWSREGLKLMAKLRVFSKNGGDLREVEWGKKKNINAGSYKLTKKQIKEAVRRVKTSTNEKINNITVLNIGKVTPIYRVLRALKYAQVI.

The protein belongs to the UPF0236 family.

This is UPF0236 protein TTE0402 from Caldanaerobacter subterraneus subsp. tengcongensis (strain DSM 15242 / JCM 11007 / NBRC 100824 / MB4) (Thermoanaerobacter tengcongensis).